We begin with the raw amino-acid sequence, 137 residues long: Hemoglobin subunit alpha-2 (137 aa).

One can recognise a Globin domain in the interval D1–R137. H54 is an O2 binding site. Residue H83 coordinates heme b.

Belongs to the globin family. Post-translationally, the N-terminus of the mature protein is acetylated. In terms of tissue distribution, red blood cells.

In Telmatobius peruvianus (Andean frog), this protein is Hemoglobin subunit alpha-2.